Reading from the N-terminus, the 227-residue chain is Cytochrome c oxidase subunit 2 (227 aa).

The Mitochondrial intermembrane portion of the chain corresponds to 1 to 14 (MAYPFQLGFQDATS). Residues 15–45 (PIMEELLHFHDHTLMIVFLISSLVLYIISSM) form a helical membrane-spanning segment. The Mitochondrial matrix portion of the chain corresponds to 46–59 (LTTKLTHTSTMDAQ). The chain crosses the membrane as a helical span at residues 60-87 (EVETIWTILPAIILILIALPSLRILYMM). Over 88–227 (DEINNPSLTV…YFEEWSASML (140 aa)) the chain is Mitochondrial intermembrane. Cu cation-binding residues include H161, C196, E198, C200, H204, and M207. E198 serves as a coordination point for Mg(2+).

This sequence belongs to the cytochrome c oxidase subunit 2 family. As to quaternary structure, component of the cytochrome c oxidase (complex IV, CIV), a multisubunit enzyme composed of 14 subunits. The complex is composed of a catalytic core of 3 subunits MT-CO1, MT-CO2 and MT-CO3, encoded in the mitochondrial DNA, and 11 supernumerary subunits COX4I, COX5A, COX5B, COX6A, COX6B, COX6C, COX7A, COX7B, COX7C, COX8 and NDUFA4, which are encoded in the nuclear genome. The complex exists as a monomer or a dimer and forms supercomplexes (SCs) in the inner mitochondrial membrane with NADH-ubiquinone oxidoreductase (complex I, CI) and ubiquinol-cytochrome c oxidoreductase (cytochrome b-c1 complex, complex III, CIII), resulting in different assemblies (supercomplex SCI(1)III(2)IV(1) and megacomplex MCI(2)III(2)IV(2)). Found in a complex with TMEM177, COA6, COX18, COX20, SCO1 and SCO2. Interacts with TMEM177 in a COX20-dependent manner. Interacts with COX20. Interacts with COX16. It depends on Cu cation as a cofactor.

It is found in the mitochondrion inner membrane. It catalyses the reaction 4 Fe(II)-[cytochrome c] + O2 + 8 H(+)(in) = 4 Fe(III)-[cytochrome c] + 2 H2O + 4 H(+)(out). Component of the cytochrome c oxidase, the last enzyme in the mitochondrial electron transport chain which drives oxidative phosphorylation. The respiratory chain contains 3 multisubunit complexes succinate dehydrogenase (complex II, CII), ubiquinol-cytochrome c oxidoreductase (cytochrome b-c1 complex, complex III, CIII) and cytochrome c oxidase (complex IV, CIV), that cooperate to transfer electrons derived from NADH and succinate to molecular oxygen, creating an electrochemical gradient over the inner membrane that drives transmembrane transport and the ATP synthase. Cytochrome c oxidase is the component of the respiratory chain that catalyzes the reduction of oxygen to water. Electrons originating from reduced cytochrome c in the intermembrane space (IMS) are transferred via the dinuclear copper A center (CU(A)) of subunit 2 and heme A of subunit 1 to the active site in subunit 1, a binuclear center (BNC) formed by heme A3 and copper B (CU(B)). The BNC reduces molecular oxygen to 2 water molecules using 4 electrons from cytochrome c in the IMS and 4 protons from the mitochondrial matrix. This is Cytochrome c oxidase subunit 2 (MT-CO2) from Equus asinus (Donkey).